The primary structure comprises 486 residues: GTPase Obg (486 aa).

Residues 2 to 159 (SRFIDRVVLH…RELVLELKSV (158 aa)) enclose the Obg domain. The OBG-type G domain occupies 160 to 340 (ADVGLVGFPS…LTFALAKLVA (181 aa)). GTP-binding positions include 166–173 (GFPSAGKS), 191–195 (FTTLV), 212–215 (DVPG), 292–295 (NKAD), and 321–323 (SAV). Mg(2+) is bound by residues serine 173 and threonine 193. One can recognise an OCT domain in the interval 358–438 (PVISNENSFS…IGNVSFDWEP (81 aa)). The segment at 462–486 (RIGATERKHASRIRRGLEGLDPEDQ) is disordered.

Belongs to the TRAFAC class OBG-HflX-like GTPase superfamily. OBG GTPase family. In terms of assembly, monomer. The cofactor is Mg(2+).

The protein resides in the cytoplasm. Functionally, an essential GTPase which binds GTP, GDP and possibly (p)ppGpp with moderate affinity, with high nucleotide exchange rates and a fairly low GTP hydrolysis rate. Plays a role in control of the cell cycle, stress response, ribosome biogenesis and in those bacteria that undergo differentiation, in morphogenesis control. The chain is GTPase Obg from Rhodococcus jostii (strain RHA1).